Here is a 335-residue protein sequence, read N- to C-terminus: MLRLSLLRSTATLPVKCQRRGLILPAAAMYTLGSLIFGKEARLADAMERGELHNKNVDYAKEAEERTELRIRALANTRPMEPRYNGHVPLHRYEKLLLFAISGWNSFFHPEDGYNIVQLGEATALPVFLENLKQTMLSDSSGRRILKEQPNITTEILHMDKLAKLPHNTFGYVYYQWLKRENVSPDTRAPVKFIDDPMHAYISKRYRQCHDFYHAITNMPIIIEGEITIKALEGANLGVPMAILGGILAPLRLKKVQRKRLYNIYLPWAVRTGLSCKPLINVYWEEMLEKDVTALRKELKITLPPDLRTMRKERAALRKEIDAKYNSQKRATTPA.

A mitochondrion-targeting transit peptide spans 1 to 10; the sequence is MLRLSLLRST. The Zn(2+) site is built by H210, D211, H214, and E226.

This sequence belongs to the COQ4 family. In terms of assembly, component of a multi-subunit COQ enzyme complex, composed of at least COQ3, COQ4, COQ5, COQ6, COQ7 and COQ9. Interacts with COQ3. Requires Zn(2+) as cofactor.

It is found in the mitochondrion inner membrane. The catalysed reaction is 4-hydroxy-3-methoxy-5-(all-trans-hexaprenyl)benzoate + H(+) = 2-methoxy-6-(all-trans-hexaprenyl)phenol + CO2. The protein operates within cofactor biosynthesis; ubiquinone biosynthesis. Lyase that catalyzes the C1-decarboxylation of 4-hydroxy-3-methoxy-5-(all-trans-hexaprenyl)benzoic acid into 2-methoxy-6-(all-trans-hexaprenyl)phenol during ubiquinone biosynthesis. The sequence is that of Ubiquinone biosynthesis protein COQ4, mitochondrial from Saccharomyces cerevisiae (strain RM11-1a) (Baker's yeast).